The primary structure comprises 110 residues: Iron-sulfur cluster assembly protein CyaY (110 aa).

This sequence belongs to the frataxin family.

Involved in iron-sulfur (Fe-S) cluster assembly. May act as a regulator of Fe-S biogenesis. In Pseudomonas putida (strain GB-1), this protein is Iron-sulfur cluster assembly protein CyaY.